The sequence spans 797 residues: Calcium-transporting ATPase CtpE (797 aa).

3 helical membrane-spanning segments follow: residues 55–75 (LLLI…LLII), 215–235 (ILQF…YTQL), and 254–274 (VPMV…VGVV). D301 acts as the 4-aspartylphosphate intermediate in catalysis. Mg(2+)-binding residues include D301, T303, and D536. 6 helical membrane passes run 601 to 621 (TVYS…AIPL), 633 to 653 (IHVT…LSLA), 667 to 687 (VMTS…VTYL), 703 to 723 (ASTA…AVIA), 729 to 749 (WRLA…SLPL), and 764 to 784 (TSIA…MWWI).

It belongs to the cation transport ATPase (P-type) (TC 3.A.3) family.

Its subcellular location is the cell membrane. The catalysed reaction is Ca(2+)(in) + ATP + H2O = Ca(2+)(out) + ADP + phosphate + H(+). In terms of biological role, P-type ATPase involved in specific uptake of calcium. The chain is Calcium-transporting ATPase CtpE (ctpE) from Mycobacterium bovis (strain ATCC BAA-935 / AF2122/97).